Consider the following 462-residue polypeptide: Integrator complex subunit 12 (462 aa).

Residues Gly-42 to Pro-129 are disordered. The segment covering Ile-59–Val-86 has biased composition (polar residues). Lys-68 participates in a covalent cross-link: Glycyl lysine isopeptide (Lys-Gly) (interchain with G-Cter in SUMO2). Residues Thr-88 to Glu-124 are compositionally biased toward basic and acidic residues. The residue at position 128 (Ser-128) is a Phosphoserine. The PHD-type zinc finger occupies Gly-159–Gln-215. Lys-254 participates in a covalent cross-link: Glycyl lysine isopeptide (Lys-Gly) (interchain with G-Cter in SUMO2). Positions Ser-301–Gln-328 are enriched in polar residues. The segment at Ser-301–Lys-462 is disordered. 2 stretches are compositionally biased toward low complexity: residues Lys-347–Val-358 and Gly-396–Ser-437. Positions Gln-449–Lys-462 are enriched in basic residues.

The protein belongs to the Integrator subunit 12 family. In terms of assembly, component of the Integrator complex, composed of core subunits INTS1, INTS2, INTS3, INTS4, INTS5, INTS6, INTS7, INTS8, INTS9/RC74, INTS10, INTS11/CPSF3L, INTS12, INTS13, INTS14 and INTS15. The core complex associates with protein phosphatase 2A subunits PPP2CA and PPP2R1A, to form the Integrator-PP2A (INTAC) complex. Post-translationally, dephosphorylated at Ser-128 by the PNUTS-PP1 complex, promoting RNA polymerase II transcription pause-release.

It is found in the nucleus. Component of the integrator complex, a multiprotein complex that terminates RNA polymerase II (Pol II) transcription in the promoter-proximal region of genes. The integrator complex provides a quality checkpoint during transcription elongation by driving premature transcription termination of transcripts that are unfavorably configured for transcriptional elongation: the complex terminates transcription by (1) catalyzing dephosphorylation of the C-terminal domain (CTD) of Pol II subunit POLR2A/RPB1 and SUPT5H/SPT5, (2) degrading the exiting nascent RNA transcript via endonuclease activity and (3) promoting the release of Pol II from bound DNA. The integrator complex is also involved in terminating the synthesis of non-coding Pol II transcripts, such as enhancer RNAs (eRNAs), small nuclear RNAs (snRNAs), telomerase RNAs and long non-coding RNAs (lncRNAs). Mediates recruitment of cytoplasmic dynein to the nuclear envelope, probably as component of the integrator complex. In Macaca fascicularis (Crab-eating macaque), this protein is Integrator complex subunit 12 (INTS12).